Here is a 428-residue protein sequence, read N- to C-terminus: Peptidase B (428 aa).

Mn(2+) is bound by residues Lys-195 and Asp-200. Lys-207 is an active-site residue. 3 residues coordinate Mn(2+): Asp-218, Asp-277, and Glu-279. Residue Arg-281 is part of the active site.

This sequence belongs to the peptidase M17 family. Homohexamer. The cofactor is Mn(2+).

The protein resides in the cytoplasm. It carries out the reaction Release of an N-terminal amino acid, Xaa, from a peptide or arylamide. Xaa is preferably Glu or Asp but may be other amino acids, including Leu, Met, His, Cys and Gln.. In terms of biological role, probably plays an important role in intracellular peptide degradation. The polypeptide is Peptidase B (Enterobacter sp. (strain 638)).